A 358-amino-acid polypeptide reads, in one-letter code: Chorismate synthase (358 aa).

R46 lines the NADP(+) pocket. Residues 123–125 (RSS), 235–236 (NA), G275, 290–294 (KPTPS), and R316 each bind FMN.

The protein belongs to the chorismate synthase family. In terms of assembly, homotetramer. Requires FMNH2 as cofactor.

The catalysed reaction is 5-O-(1-carboxyvinyl)-3-phosphoshikimate = chorismate + phosphate. The protein operates within metabolic intermediate biosynthesis; chorismate biosynthesis; chorismate from D-erythrose 4-phosphate and phosphoenolpyruvate: step 7/7. Its function is as follows. Catalyzes the anti-1,4-elimination of the C-3 phosphate and the C-6 proR hydrogen from 5-enolpyruvylshikimate-3-phosphate (EPSP) to yield chorismate, which is the branch point compound that serves as the starting substrate for the three terminal pathways of aromatic amino acid biosynthesis. This reaction introduces a second double bond into the aromatic ring system. The chain is Chorismate synthase from Helicobacter hepaticus (strain ATCC 51449 / 3B1).